The sequence spans 305 residues: GMP synthase [glutamine-hydrolyzing] subunit B (305 aa).

The GMPS ATP-PPase domain occupies 2 to 184 (VNIEKFIDQA…LGLPAEIQHR (183 aa)). Residue 29–35 (SGGVDSS) coordinates ATP.

As to quaternary structure, heterodimer composed of a glutamine amidotransferase subunit (A) and a GMP-binding subunit (B).

It carries out the reaction XMP + L-glutamine + ATP + H2O = GMP + L-glutamate + AMP + diphosphate + 2 H(+). Its pathway is purine metabolism; GMP biosynthesis; GMP from XMP (L-Gln route): step 1/1. Functionally, catalyzes the synthesis of GMP from XMP. This chain is GMP synthase [glutamine-hydrolyzing] subunit B, found in Methanoculleus marisnigri (strain ATCC 35101 / DSM 1498 / JR1).